We begin with the raw amino-acid sequence, 264 residues long: Thiazole synthase (264 aa).

Lys106 functions as the Schiff-base intermediate with DXP in the catalytic mechanism. 1-deoxy-D-xylulose 5-phosphate is bound by residues Gly167, 193–194 (AG), and 215–216 (NS).

This sequence belongs to the ThiG family. As to quaternary structure, homotetramer. Forms heterodimers with either ThiH or ThiS.

Its subcellular location is the cytoplasm. It carries out the reaction [ThiS sulfur-carrier protein]-C-terminal-Gly-aminoethanethioate + 2-iminoacetate + 1-deoxy-D-xylulose 5-phosphate = [ThiS sulfur-carrier protein]-C-terminal Gly-Gly + 2-[(2R,5Z)-2-carboxy-4-methylthiazol-5(2H)-ylidene]ethyl phosphate + 2 H2O + H(+). It functions in the pathway cofactor biosynthesis; thiamine diphosphate biosynthesis. Catalyzes the rearrangement of 1-deoxy-D-xylulose 5-phosphate (DXP) to produce the thiazole phosphate moiety of thiamine. Sulfur is provided by the thiocarboxylate moiety of the carrier protein ThiS. In vitro, sulfur can be provided by H(2)S. This is Thiazole synthase from Stutzerimonas stutzeri (strain A1501) (Pseudomonas stutzeri).